A 220-amino-acid polypeptide reads, in one-letter code: Deoxyribose-phosphate aldolase 2 (220 aa).

Asp89 acts as the Proton donor/acceptor in catalysis. Lys151 serves as the catalytic Schiff-base intermediate with acetaldehyde. Lys180 acts as the Proton donor/acceptor in catalysis.

The protein belongs to the DeoC/FbaB aldolase family. DeoC type 1 subfamily.

The protein localises to the cytoplasm. The catalysed reaction is 2-deoxy-D-ribose 5-phosphate = D-glyceraldehyde 3-phosphate + acetaldehyde. The protein operates within carbohydrate degradation; 2-deoxy-D-ribose 1-phosphate degradation; D-glyceraldehyde 3-phosphate and acetaldehyde from 2-deoxy-alpha-D-ribose 1-phosphate: step 2/2. Functionally, catalyzes a reversible aldol reaction between acetaldehyde and D-glyceraldehyde 3-phosphate to generate 2-deoxy-D-ribose 5-phosphate. This chain is Deoxyribose-phosphate aldolase 2, found in Staphylococcus aureus (strain COL).